A 379-amino-acid chain; its full sequence is Epoxyqueuosine reductase (379 aa).

The Proton donor role is filled by Asp139. One can recognise a 4Fe-4S ferredoxin-type domain in the interval 181–213 (IPLPVDQPVEEGCGKCVACMTICPTGAIVEPYT). Positions 193, 196, 199, 203, 219, 246, 249, and 253 each coordinate [4Fe-4S] cluster.

It belongs to the QueG family. As to quaternary structure, monomer. The cofactor is cob(II)alamin. [4Fe-4S] cluster serves as cofactor.

The protein localises to the cytoplasm. It catalyses the reaction epoxyqueuosine(34) in tRNA + AH2 = queuosine(34) in tRNA + A + H2O. It functions in the pathway tRNA modification; tRNA-queuosine biosynthesis. Functionally, catalyzes the conversion of epoxyqueuosine (oQ) to queuosine (Q), which is a hypermodified base found in the wobble positions of tRNA(Asp), tRNA(Asn), tRNA(His) and tRNA(Tyr). The protein is Epoxyqueuosine reductase of Escherichia coli (strain K12).